Consider the following 169-residue polypeptide: ATP-dependent Clp protease adapter protein CLPS2, chloroplastic (169 aa).

The N-terminal 33 residues, 1–33, are a transit peptide targeting the chloroplast; the sequence is MLATRCKCNLPSRSFVAPARSVRTRALHVEGRF. A disordered region spans residues 67-92; the sequence is DAKTDNGNNGSNTDKDKKSPPGGGNY.

Belongs to the ClpS family.

It localises to the plastid. Its subcellular location is the chloroplast stroma. Small adapter protein that modulate the activity of plastid Clp protease system (CLPC). Probably involved in substrate selection for plastid CLPC. This is ATP-dependent Clp protease adapter protein CLPS2, chloroplastic from Chlamydomonas reinhardtii (Chlamydomonas smithii).